A 435-amino-acid chain; its full sequence is MTSLKTPKGTMDESPRQCFLHEEIIERIRRVFVLYGAVPISTPTFEMKSILTNKYGEDTKLIYDLKDQGGEICALRYDLTVPFARYLASNKIRRMKRYQIGRVYRRDQPSIARGRLREFVQADFDIAGECIQMMADAEVVSCVDRILSMFGIGEYRIKVNDRRILTSILEVVGVSCESYGTVCSTIDKIEKMSWEDIGRELVLKGLSEEQVRTTKKYMTMGGKEDVLGLLKADPVYGIERCKAAVHDMEELFRLCRILGCSGSLVMDISLARGLDYYTGMILEAEYVGKSVGSVIGGGRYDNLTENLGERCVSTPCVGFSVGVSRIFSLLYEEYDKESSTMVYVGASGGLFLDERLSVLRILQDANICSETFYTRRSSFESQQKYVAKKKIPFIVVVGESEIAAGSVQVINALTRKKEIVKVEQMVSYLLDPENQ.

Belongs to the class-II aminoacyl-tRNA synthetase family.

It localises to the cytoplasm. It carries out the reaction tRNA(His) + L-histidine + ATP = L-histidyl-tRNA(His) + AMP + diphosphate + H(+). The sequence is that of Probable histidine--tRNA ligase, cytoplasmic from Encephalitozoon cuniculi (strain GB-M1) (Microsporidian parasite).